The primary structure comprises 1030 residues: Putative pentatricopeptide repeat-containing protein At5g06400, mitochondrial (1030 aa).

The transit peptide at 1-77 (MKALFRFKSC…VKLDETTRLR (77 aa)) directs the protein to the mitochondrion. 19 PPR repeats span residues 188-222 (RVGI…GCDK), 223-257 (DIRT…GFEL), 258-292 (DATA…GITF), 293-323 (GLRT…MVRI), 328-362 (EHDA…EMCL), 363-393 (DAKY…MKRR), 397-431 (DSNV…GRPP), 432-466 (RVST…GIEP), 467-501 (DSVA…GIKP), 502-536 (TWKS…KIVI), 677-711 (NSEA…GCLI), 712-746 (TQDT…GLIP), 747-783 (SSST…GFVP), 784-814 (DREL…LGKI), 818-852 (VTVA…RSLL), 853-887 (DQYT…GTKP), 888-922 (GVHV…SCEP), 923-957 (SVVT…GTSP), and 958-992 (DFKT…GIAP).

The protein belongs to the PPR family. P subfamily.

The protein resides in the mitochondrion. This is Putative pentatricopeptide repeat-containing protein At5g06400, mitochondrial from Arabidopsis thaliana (Mouse-ear cress).